Here is a 232-residue protein sequence, read N- to C-terminus: MTVSTTSLCTPIVKICGLTVEAAHCAISSGADLIGMILVPDLKRTVQQTKLKAISRAVTRIPGVPTSPSRGIDRPSHGLVRGTFSADYTSWPLVVGVFRNQSLDEVLRMLRNYDLDIVQLHGSEPLHQWTREIPVPVIKKFGLGEDDLMAPGLHAVTLLDGGAGGEGQKISWEGLPGSGAFMLAGGLTVDNVAVAVKIPNVAGVDVSSGVATDGMQDLEKNCRCLFRNAKGW.

This sequence belongs to the TrpF family.

It catalyses the reaction N-(5-phospho-beta-D-ribosyl)anthranilate = 1-(2-carboxyphenylamino)-1-deoxy-D-ribulose 5-phosphate. Its pathway is amino-acid biosynthesis; L-tryptophan biosynthesis; L-tryptophan from chorismate: step 3/5. This Lipomyces starkeyi (Oleaginous yeast) protein is N-(5'-phosphoribosyl)anthranilate isomerase (TRP1).